The following is a 489-amino-acid chain: MGDKAKGEGMVWGLEAGPGEASLCHTGLEDMLLFFPETLAILSDTGEPQGELTIEVQKGKYKDDLGILTHCLLVHASSRGFLDKSVCGSSLLGYLNEHLELMEQHSQEFIKFPIIPMERKMSVLKQDDQLVVSRSVKEGEETKTGVSVFPCKSLKGFVSSAANVVLLRVMAWRQSVPSGARFLALDSEGKLCYCTYKSLGFQTIQVGNQQAEMFIVEQTIHSEDGIPFSCQFYLLSDGHLAKRVQVGSPGCCIITKMPLIREEDVIEPPPTFDRKPLVWEEDLELYSKFLDRKEQLRLSHTRYLRQHPEAQALVSDFLLFLLLRRPEDVVTFAAEHFGPFAALRSPIPALRSSHQPSPFRSLEEEEEGEEEEEEEEEEEEGEEEGEGKEEVEEVEIEGDDDYLYVDEEEEVEDDIYYDSYYYKYEDENIYEDENIYYDNYDVDNDNDDIDNYDNDDDDDDDVDDDDDVKVDDDNVDVDNDNVDVDNDNI.

Disordered regions lie at residues Leu350–Glu412 and Asp438–Ile489. Over residues Glu363–Glu412 the composition is skewed to acidic residues.

The protein belongs to the CATIP family. As to quaternary structure, interacts with TTC17. In terms of tissue distribution, expressed in testis and ovary. Strongly expressed in pachytene spermatocytes and round spermatids compared to spermatogonia and somatic cells. Expressed in Leydig cells (at protein level).

It is found in the nucleus. It localises to the cytoplasm. Its subcellular location is the cell membrane. The protein resides in the cytoskeleton. Its function is as follows. Plays a role in primary ciliogenesis by modulating actin polymerization. This Rattus norvegicus (Rat) protein is Ciliogenesis-associated TTC17-interacting protein (Catip).